The following is a 369-amino-acid chain: Immunoglobulin superfamily member 5 (369 aa).

Residues Met-1–Ser-24 form the signal peptide. Ig-like V-type domains follow at residues Tyr-25 to Gln-125 and Gly-128 to Asn-217. At Tyr-25–Ala-239 the chain is on the extracellular side. 2 N-linked (GlcNAc...) asparagine glycosylation sites follow: Asn-33 and Asn-45. The cysteines at positions 46 and 109 are disulfide-linked. Residues Asn-146, Asn-196, and Asn-217 are each glycosylated (N-linked (GlcNAc...) asparagine). Cys-149 and Cys-201 form a disulfide bridge. Residues Ile-240–Ile-260 form a helical membrane-spanning segment. Residues Phe-261–Val-369 are Cytoplasmic-facing. Residues Pro-321–Ser-354 are disordered.

The protein belongs to the immunoglobulin superfamily. In terms of assembly, interacts with MAGI1 at tight junctions, forms a tripartite complex with NPHS1. Interacts with LNX1 isoform 2 via its PDZ 2 domain, it may also interact with other isoforms containing this domain. In kidney, it is found in glomeruli and in the proximal tubules (at protein level).

Its subcellular location is the apical cell membrane. The protein localises to the cell junction. It is found in the tight junction. Its function is as follows. Provides, together with MAGI1, an adhesion machinery at tight junctions, which may regulate the permeability of kidney glomerulus and small intestinal epithelial cells. Mediates calcium-independent homophilic cell adhesion. In testis, it may function as a cell adhesion molecule rather than a tight-junction protein. It may participate in the adhesion between spermatogonia-spermatogonia, spermatogonia-Sertoli cells, and Sertoli cells-Sertoli cells. In Rattus norvegicus (Rat), this protein is Immunoglobulin superfamily member 5 (Igsf5).